The following is a 339-amino-acid chain: Dihydroorotase (339 aa).

Histidine 12 and histidine 14 together coordinate Zn(2+). Residues histidine 14–arginine 16 and asparagine 40 contribute to the substrate site. Residues lysine 94, histidine 133, histidine 167, and aspartate 239 each coordinate Zn(2+). Lysine 94 carries the N6-carboxylysine modification. A substrate-binding site is contributed by histidine 133. Aspartate 239 is a catalytic residue. Positions 243 and 255 each coordinate substrate.

This sequence belongs to the metallo-dependent hydrolases superfamily. DHOase family. Class II DHOase subfamily. In terms of assembly, homodimer. It depends on Zn(2+) as a cofactor.

The enzyme catalyses (S)-dihydroorotate + H2O = N-carbamoyl-L-aspartate + H(+). Its pathway is pyrimidine metabolism; UMP biosynthesis via de novo pathway; (S)-dihydroorotate from bicarbonate: step 3/3. Functionally, catalyzes the reversible cyclization of carbamoyl aspartate to dihydroorotate. The sequence is that of Dihydroorotase from Helicobacter pylori (strain P12).